The following is a 392-amino-acid chain: Dual-specificity RNA methyltransferase RlmN (392 aa).

Catalysis depends on Glu-116, which acts as the Proton acceptor. Residues 122–364 enclose the Radical SAM core domain; the sequence is EEGRGTLCVS…SPIRTPRGED (243 aa). A disulfide bridge connects residues Cys-129 and Cys-369. Cys-136, Cys-140, and Cys-143 together coordinate [4Fe-4S] cluster. Residues 195–196, Ser-227, 249–251, and Asn-326 contribute to the S-adenosyl-L-methionine site; these read GE and SFH. Residue Cys-369 is the S-methylcysteine intermediate of the active site.

Belongs to the radical SAM superfamily. RlmN family. The cofactor is [4Fe-4S] cluster.

Its subcellular location is the cytoplasm. The catalysed reaction is adenosine(2503) in 23S rRNA + 2 reduced [2Fe-2S]-[ferredoxin] + 2 S-adenosyl-L-methionine = 2-methyladenosine(2503) in 23S rRNA + 5'-deoxyadenosine + L-methionine + 2 oxidized [2Fe-2S]-[ferredoxin] + S-adenosyl-L-homocysteine. The enzyme catalyses adenosine(37) in tRNA + 2 reduced [2Fe-2S]-[ferredoxin] + 2 S-adenosyl-L-methionine = 2-methyladenosine(37) in tRNA + 5'-deoxyadenosine + L-methionine + 2 oxidized [2Fe-2S]-[ferredoxin] + S-adenosyl-L-homocysteine. Functionally, specifically methylates position 2 of adenine 2503 in 23S rRNA and position 2 of adenine 37 in tRNAs. m2A2503 modification seems to play a crucial role in the proofreading step occurring at the peptidyl transferase center and thus would serve to optimize ribosomal fidelity. This is Dual-specificity RNA methyltransferase RlmN from Cereibacter sphaeroides (strain ATCC 17029 / ATH 2.4.9) (Rhodobacter sphaeroides).